Reading from the N-terminus, the 208-residue chain is Small ribosomal subunit protein uS4 (208 aa).

In terms of domain architecture, S4 RNA-binding spans 95–157 (RRIDNVVYRA…DRLKKLVRSN (63 aa)).

This sequence belongs to the universal ribosomal protein uS4 family. As to quaternary structure, part of the 30S ribosomal subunit. Contacts protein S5. The interaction surface between S4 and S5 is involved in control of translational fidelity.

In terms of biological role, one of the primary rRNA binding proteins, it binds directly to 16S rRNA where it nucleates assembly of the body of the 30S subunit. With S5 and S12 plays an important role in translational accuracy. The sequence is that of Small ribosomal subunit protein uS4 from Borrelia turicatae (strain 91E135).